Consider the following 294-residue polypeptide: Nucleoside-specific channel-forming protein Tsx (294 aa).

The first 22 residues, methionine 1–alanine 22, serve as a signal peptide directing secretion.

Belongs to the nucleoside-specific channel-forming outer membrane porin (Tsx) (TC 1.B.10) family.

Its subcellular location is the cell outer membrane. In terms of biological role, functions as a substrate-specific channel for nucleosides and deoxynucleosides. The sequence is that of Nucleoside-specific channel-forming protein Tsx (tsx) from Escherichia coli O157:H7.